The chain runs to 177 residues: Small ribosomal subunit protein bS16 (177 aa).

A disordered region spans residues Gly80–Lys177. A compositionally biased stretch (low complexity) spans Ala107–Glu122.

Belongs to the bacterial ribosomal protein bS16 family.

The protein is Small ribosomal subunit protein bS16 of Pelagibacter ubique (strain HTCC1062).